Here is a 96-residue protein sequence, read N- to C-terminus: NADH-ubiquinone oxidoreductase chain 4L (96 aa).

A run of 3 helical transmembrane segments spans residues 1–21, 27–47, and 61–81; these read MELM…ALSL, MLAL…LVMF, and IILL…VVAI.

The protein belongs to the complex I subunit 4L family.

It is found in the mitochondrion membrane. It catalyses the reaction a ubiquinone + NADH + 5 H(+)(in) = a ubiquinol + NAD(+) + 4 H(+)(out). Its function is as follows. Core subunit of the mitochondrial membrane respiratory chain NADH dehydrogenase (Complex I) which catalyzes electron transfer from NADH through the respiratory chain, using ubiquinone as an electron acceptor. Part of the enzyme membrane arm which is embedded in the lipid bilayer and involved in proton translocation. The protein is NADH-ubiquinone oxidoreductase chain 4L (MT-ND4L) of Lycodon semicarinatus (Ryukyu odd-tooth snake).